A 176-amino-acid chain; its full sequence is Ribosome maturation factor RimM (176 aa).

Residues 100-173 (EGEFHLLDLV…WLRLTPPPGL (74 aa)) form the PRC barrel domain.

This sequence belongs to the RimM family. In terms of assembly, binds ribosomal protein uS19.

It localises to the cytoplasm. Its function is as follows. An accessory protein needed during the final step in the assembly of 30S ribosomal subunit, possibly for assembly of the head region. Essential for efficient processing of 16S rRNA. May be needed both before and after RbfA during the maturation of 16S rRNA. It has affinity for free ribosomal 30S subunits but not for 70S ribosomes. This is Ribosome maturation factor RimM from Prochlorococcus marinus (strain MIT 9303).